A 224-amino-acid chain; its full sequence is MQFPAFYVTGTDTGIGKTVASTALLHAVRARGHTAVGMKPVASGCVATPQGWHNEDALALQAASQPQPDYATLNPYALPAALAPELAAADVGVTLSLVPLQQALAQLRAQAEVVVVEGVGGWAAPLSAQLDQADLVRALQLPVVLVVGVRLGCINHARLTAAAIAADGLRCIGWIANEIDPQMERIEDNIRMLGQRLAMPCWGRIPWRPNAQAEGLAQHIRLPE.

Residue 14 to 19 (GIGKTV) coordinates ATP. Residue Thr18 participates in Mg(2+) binding. The active site involves Lys39. Ser43 lines the substrate pocket. Residues Asp56, 117–120 (EGVG), and 177–178 (NE) each bind ATP. Positions 56 and 117 each coordinate Mg(2+).

The protein belongs to the dethiobiotin synthetase family. Homodimer. The cofactor is Mg(2+).

It is found in the cytoplasm. It carries out the reaction (7R,8S)-7,8-diammoniononanoate + CO2 + ATP = (4R,5S)-dethiobiotin + ADP + phosphate + 3 H(+). Its pathway is cofactor biosynthesis; biotin biosynthesis; biotin from 7,8-diaminononanoate: step 1/2. Its function is as follows. Catalyzes a mechanistically unusual reaction, the ATP-dependent insertion of CO2 between the N7 and N8 nitrogen atoms of 7,8-diaminopelargonic acid (DAPA, also called 7,8-diammoniononanoate) to form a ureido ring. The sequence is that of ATP-dependent dethiobiotin synthetase BioD from Xanthomonas campestris pv. campestris (strain 8004).